We begin with the raw amino-acid sequence, 78 residues long: Large ribosomal subunit protein uL29 (78 aa).

The tract at residues 59 to 78 (VESERKRGKSLSSTQTQKEE) is disordered. The segment covering 68-78 (SLSSTQTQKEE) has biased composition (polar residues).

The protein belongs to the universal ribosomal protein uL29 family.

The chain is Large ribosomal subunit protein uL29 from Synechococcus sp. (strain JA-3-3Ab) (Cyanobacteria bacterium Yellowstone A-Prime).